The following is a 548-amino-acid chain: Membrane protein insertase YidC (548 aa).

Residues 6 to 26 (NLLVIALLFVSFMIWQAWEQD) form a helical membrane-spanning segment. The disordered stretch occupies residues 28–58 (NPQPQQQQTTQTTTTAAGSAADQGVPASGQG). Residues 29 to 42 (PQPQQQQTTQTTTT) show a composition bias toward low complexity. Helical transmembrane passes span 350–370 (FLGN…GIMY), 420–440 (LGGC…YYML), 458–478 (LSAQ…MFFI), and 499–519 (PVIF…YYIV).

Belongs to the OXA1/ALB3/YidC family. Type 1 subfamily. In terms of assembly, interacts with the Sec translocase complex via SecD. Specifically interacts with transmembrane segments of nascent integral membrane proteins during membrane integration.

Its subcellular location is the cell inner membrane. Required for the insertion and/or proper folding and/or complex formation of integral membrane proteins into the membrane. Involved in integration of membrane proteins that insert both dependently and independently of the Sec translocase complex, as well as at least some lipoproteins. Aids folding of multispanning membrane proteins. This Enterobacter sp. (strain 638) protein is Membrane protein insertase YidC.